A 402-amino-acid chain; its full sequence is E3 ubiquitin-protein ligase makorin-2 (402 aa).

C3H1-type zinc fingers lie at residues 2-29, 31-58, and 141-168; these read TTKQ…HDPS, SKPS…HVKL, and QDLP…HGDK. Residues 169–198 form a makorin-type Cys-His region; the sequence is CEVCGLQVLDPHNPEQRSMHEKMCLLAFEA. The RING-type zinc-finger motif lies at 214–268; it reads CSICMEVVVQKMNPSDRRFGILSSCCHVFCLACIRKWRCTRNFSNKIIKSCPECR. The C3H1-type 4 zinc-finger motif lies at 297-326; sequence GVGKKPCKYFDQGRGSCPFGGKCLYLHALP.

Its subcellular location is the cytoplasm. The protein localises to the nucleus. The catalysed reaction is S-ubiquitinyl-[E2 ubiquitin-conjugating enzyme]-L-cysteine + [acceptor protein]-L-lysine = [E2 ubiquitin-conjugating enzyme]-L-cysteine + N(6)-ubiquitinyl-[acceptor protein]-L-lysine.. The protein operates within protein modification; protein ubiquitination. E3 ubiquitin ligase catalyzing the covalent attachment of ubiquitin moieties onto substrate proteins. Inhibits neurogenesis and axis formation during embryonic development by modulating the phosphatidylinositol 3-kinase (PI3K) pathway. Acts downstream of PI3K and akt1 to up-regulate gsk3b mRNA expression. In Takifugu rubripes (Japanese pufferfish), this protein is E3 ubiquitin-protein ligase makorin-2.